We begin with the raw amino-acid sequence, 447 residues long: N-succinylarginine dihydrolase (447 aa).

Residues 19–28, Asn-110, and 137–138 contribute to the substrate site; these read AGLSFGNEAS and HR. Glu-174 is a catalytic residue. Arg-212 lines the substrate pocket. His-248 is an active-site residue. Positions 250 and 359 each coordinate substrate. Cys-365 functions as the Nucleophile in the catalytic mechanism.

Belongs to the succinylarginine dihydrolase family. Homodimer.

It carries out the reaction N(2)-succinyl-L-arginine + 2 H2O + 2 H(+) = N(2)-succinyl-L-ornithine + 2 NH4(+) + CO2. It participates in amino-acid degradation; L-arginine degradation via AST pathway; L-glutamate and succinate from L-arginine: step 2/5. Its function is as follows. Catalyzes the hydrolysis of N(2)-succinylarginine into N(2)-succinylornithine, ammonia and CO(2). The protein is N-succinylarginine dihydrolase of Shigella boydii serotype 4 (strain Sb227).